Reading from the N-terminus, the 465-residue chain is SHC-transforming protein 1 (465 aa).

Positions 44 to 227 (MGPGVPYLVR…AGFDGSAWDE (184 aa)) constitute a PID domain. The interval 228–369 (EEEELPDHAY…SMEDQLKREP (142 aa)) is CH1. Residues 281-315 (VSGAEQDSRKMQPTLQGRERFPVPCSRPPNRPDLF) are disordered. The SH2 domain maps to 370 to 461 (WYQGKMSRKE…GSELCLQQPV (92 aa)).

As to quaternary structure, interacts with grb2. As to expression, highly expressed in oocytes and embryo. Also expressed in liver. Detected in ovary, testis and heart and to a lesser extent in liver (at protein level).

The protein resides in the cytoplasm. Its function is as follows. Implicated in ras-dependent oocyte maturation induced by insulin/IGF1. The polypeptide is SHC-transforming protein 1 (shc1) (Xenopus laevis (African clawed frog)).